We begin with the raw amino-acid sequence, 123 residues long: VQ motif-containing protein 29 (123 aa).

The disordered stretch occupies residues 24–55 (TKNYLTSLHSTRKQPSKPLKRPAISSPLNPMH). Positions 33–43 (STRKQPSKPLK) are enriched in basic residues. A VQ motif is present at residues 66-75 (FKVLVQRLTG). Over residues 77 to 94 (PEHETVQAKPLKTSDDAA) the composition is skewed to basic and acidic residues. Positions 77–123 (PEHETVQAKPLKTSDDAAKQSSSSFAFDPSSSWGDFSFQNPANISRW) are disordered. The segment covering 97 to 108 (SSSSFAFDPSSS) has biased composition (low complexity). Polar residues predominate over residues 109-123 (WGDFSFQNPANISRW).

It is found in the nucleus. In terms of biological role, may function as negative regulator of flowering transition. The protein is VQ motif-containing protein 29 of Arabidopsis thaliana (Mouse-ear cress).